Reading from the N-terminus, the 346-residue chain is Phospholipase A1 (346 aa).

Residues 1 to 26 (MRKFAAIFVVFFVQCTHLYSLAQARA) form the signal peptide. Residues 27 to 37 (EPDPGVVEYLK) constitute a propeptide that is removed on maturation. Residues asparagine 44 and asparagine 72 are each glycosylated (N-linked (GlcNAc...) asparagine). Residue serine 167 is the Nucleophile of the active site. N-linked (GlcNAc...) asparagine glycosylation occurs at asparagine 185. Active-site charge relay system residues include aspartate 195 and histidine 258.

This sequence belongs to the AB hydrolase superfamily. Lipase family. Post-translationally, contains six disulfide bonds. N-glycosylated; contains mannose. As to expression, expressed by the venom gland.

It is found in the secreted. The enzyme catalyses a 1,2-diacyl-sn-glycero-3-phosphocholine + H2O = a 2-acyl-sn-glycero-3-phosphocholine + a fatty acid + H(+). Its function is as follows. Catalyzes the hydrolysis of phosphatidylcholine with phospholipase A1 activity. Induces hemolytic activity. Acts as an allergen. The protein is Phospholipase A1 of Solenopsis invicta (Red imported fire ant).